Here is a 139-residue protein sequence, read N- to C-terminus: Transcription antitermination protein NusB (139 aa).

It belongs to the NusB family.

In terms of biological role, involved in transcription antitermination. Required for transcription of ribosomal RNA (rRNA) genes. Binds specifically to the boxA antiterminator sequence of the ribosomal RNA (rrn) operons. This chain is Transcription antitermination protein NusB, found in Natranaerobius thermophilus (strain ATCC BAA-1301 / DSM 18059 / JW/NM-WN-LF).